Here is a 156-residue protein sequence, read N- to C-terminus: Small ribosomal subunit protein uS7 (156 aa).

The protein belongs to the universal ribosomal protein uS7 family. Part of the 30S ribosomal subunit. Contacts proteins S9 and S11.

Its function is as follows. One of the primary rRNA binding proteins, it binds directly to 16S rRNA where it nucleates assembly of the head domain of the 30S subunit. Is located at the subunit interface close to the decoding center, probably blocks exit of the E-site tRNA. This Dechloromonas aromatica (strain RCB) protein is Small ribosomal subunit protein uS7.